Reading from the N-terminus, the 241-residue chain is Reduced meiotic recombination protein 1 (241 aa).

Belongs to the RMR1 family. In terms of processing, sumoylated.

Its subcellular location is the cytoplasm. It localises to the nucleus. Required for normal levels of gene conversion events during meiosis. The protein is Reduced meiotic recombination protein 1 (RMR1) of Saccharomyces cerevisiae (strain ATCC 204508 / S288c) (Baker's yeast).